Here is a 387-residue protein sequence, read N- to C-terminus: Succinate--CoA ligase [ADP-forming] subunit beta (387 aa).

Positions 9–244 (KQLFASYGLP…VSQEDDRENR (236 aa)) constitute an ATP-grasp domain. ATP is bound by residues Lys46, 53–55 (GRG), Glu99, Cys102, and Glu107. Asn199 and Asp213 together coordinate Mg(2+). Substrate is bound by residues Asn264 and 321–323 (GIV).

Belongs to the succinate/malate CoA ligase beta subunit family. As to quaternary structure, heterotetramer of two alpha and two beta subunits. Mg(2+) is required as a cofactor.

It carries out the reaction succinate + ATP + CoA = succinyl-CoA + ADP + phosphate. It catalyses the reaction GTP + succinate + CoA = succinyl-CoA + GDP + phosphate. The protein operates within carbohydrate metabolism; tricarboxylic acid cycle; succinate from succinyl-CoA (ligase route): step 1/1. Its function is as follows. Succinyl-CoA synthetase functions in the citric acid cycle (TCA), coupling the hydrolysis of succinyl-CoA to the synthesis of either ATP or GTP and thus represents the only step of substrate-level phosphorylation in the TCA. The beta subunit provides nucleotide specificity of the enzyme and binds the substrate succinate, while the binding sites for coenzyme A and phosphate are found in the alpha subunit. The polypeptide is Succinate--CoA ligase [ADP-forming] subunit beta (Legionella pneumophila (strain Paris)).